We begin with the raw amino-acid sequence, 512 residues long: N-fatty-acyl-amino acid synthase/hydrolase PM20D1 (512 aa).

The N-terminal stretch at 1–34 (MAVSRWKAVGSTLLAAFLVGLVVLIAVLLIRTYT) is a signal peptide. 2 N-linked (GlcNAc...) asparagine glycosylation sites follow: Asn-45 and Asn-81. Zn(2+) is bound at residue His-134. Asp-136 is an active-site residue. Asp-166 provides a ligand contact to Zn(2+). Residue Glu-200 is the Proton acceptor of the active site. Residues Glu-201 and Asp-227 each coordinate Zn(2+). N-linked (GlcNAc...) asparagine glycosylation is present at Asn-450. His-472 serves as a coordination point for Zn(2+).

It belongs to the peptidase M20A family.

It is found in the secreted. The enzyme catalyses an N-acyl-L-amino acid + H2O = an L-alpha-amino acid + a carboxylate. It carries out the reaction an N-acyl-aromatic L-alpha-amino acid + H2O = an aromatic L-alpha-amino acid + a carboxylate. It catalyses the reaction N-(5Z,8Z,11Z,14Z)-eicosatetraenoyl-glycine + H2O = (5Z,8Z,11Z,14Z)-eicosatetraenoate + glycine. The catalysed reaction is N-hexadecanoyl-L-phenylalanine + H2O = hexadecanoate + L-phenylalanine. The enzyme catalyses N-octadecanoyl-L-phenylalanine + H2O = octadecanoate + L-phenylalanine. It carries out the reaction N-(4Z,7Z,10Z,13Z,16Z,19Z-docosahexaenoyl)-L-phenylalanine + H2O = (4Z,7Z,10Z,13Z,16Z,19Z)-docosahexaenoate + L-phenylalanine. It catalyses the reaction N-(9Z-octadecenoyl)-L-asparagine + H2O = L-asparagine + (9Z)-octadecenoate. The catalysed reaction is (9Z)-octadecenoate + glycine = N-(9Z-octadecenoyl)glycine + H2O. The enzyme catalyses N-(9Z-octadecenoyl)-L-lysine + H2O = L-lysine + (9Z)-octadecenoate. It carries out the reaction N-(9Z-octadecenoyl)-L-methionine + H2O = (9Z)-octadecenoate + L-methionine. It catalyses the reaction N-(9Z-octadecenoyl)-L-serine + H2O = L-serine + (9Z)-octadecenoate. The catalysed reaction is N-(9Z-octadecenoyl)-L-tryptophan + H2O = L-tryptophan + (9Z)-octadecenoate. The enzyme catalyses N-(9Z-octadecenoyl)-L-tyrosine + H2O = L-tyrosine + (9Z)-octadecenoate. It carries out the reaction N-(9Z-octadecenoyl)-L-glutamine + H2O = L-glutamine + (9Z)-octadecenoate. It catalyses the reaction N-(5Z,8Z,11Z,14Z-eicosatetraenoyl)-L-serine + H2O = (5Z,8Z,11Z,14Z)-eicosatetraenoate + L-serine. The catalysed reaction is (5Z,8Z,11Z,14Z)-eicosatetraenoate + L-phenylalanine = N-(5Z,8Z,11Z,14Z-eicosatetraenoyl)-L-phenylalanine + H2O. The enzyme catalyses N-(9Z-octadecenoyl)-L-leucine + H2O = L-leucine + (9Z)-octadecenoate. It carries out the reaction L-phenylalanine + (9Z)-octadecenoate = N-(9Z-octadecenoyl)-L-phenylalanine + H2O. It functions in the pathway amino-acid metabolism. The protein operates within energy metabolism; electron transfer. It participates in lipid metabolism; fatty acid metabolism. Lipoproteins are powerful coactivators of PM20D1 activity in vitro and NAA biosynthesis in vivo. Secreted enzyme that regulates the endogenous N-fatty acyl amino acid (NAAs) tissue and circulating levels by functioning as a bidirectional NAA synthase/hydrolase. It condenses free fatty acids and free amino acids to generate NAAs and bidirectionally catalyzes the reverse hydrolysis reaction. Some of these NAAs stimulate oxidative metabolism via mitochondrial uncoupling, increasing energy expenditure in a UPC1-independent manner. Thereby, this secreted protein may indirectly regulate whole body energy expenditure. PM20D1 circulates in tight association with both low- and high-density (LDL and HDL,respectively) lipoprotein particles. The protein is N-fatty-acyl-amino acid synthase/hydrolase PM20D1 of Xenopus tropicalis (Western clawed frog).